The primary structure comprises 101 residues: Small ribosomal subunit protein uS14 (101 aa).

This sequence belongs to the universal ribosomal protein uS14 family. As to quaternary structure, part of the 30S ribosomal subunit. Contacts proteins S3 and S10.

Its function is as follows. Binds 16S rRNA, required for the assembly of 30S particles and may also be responsible for determining the conformation of the 16S rRNA at the A site. The protein is Small ribosomal subunit protein uS14 of Psychrobacter arcticus (strain DSM 17307 / VKM B-2377 / 273-4).